The sequence spans 480 residues: Uridine 5'-monophosphate synthase (480 aa).

Position 2 is an N-acetylalanine (A2). An OPRTase region spans residues 2–214; that stretch reads AAADALLGSL…AFVAANPNDS (213 aa). Y37 is subject to Phosphotyrosine. S214 carries the post-translational modification Phosphoserine. The domain linker stretch occupies residues 215–220; the sequence is LPSVKK. The interval 221-480 is OMPdecase; it reads EPKELSFGAR…WEAYLSRLAV (260 aa). S257 is a binding site for orotidine 5'-phosphate. UMP is bound by residues S257, D259, and 281–283; that span reads KIH. Orotidine 5'-phosphate contacts are provided by residues K281, K314, D317, T321, S372, 430–432, and 450–451; these read QQY and GR. Residues K314 and D317 each act as for OMPdecase activity in the active site. UMP-binding positions include D317, T321, S372, 430-432, and 450-451; these read QQY and GR.

This sequence in the N-terminal section; belongs to the purine/pyrimidine phosphoribosyltransferase family. It in the C-terminal section; belongs to the OMP decarboxylase family. Homodimer; dimerization is required for enzymatic activity.

It catalyses the reaction orotidine 5'-phosphate + diphosphate = orotate + 5-phospho-alpha-D-ribose 1-diphosphate. The enzyme catalyses orotidine 5'-phosphate + H(+) = UMP + CO2. It participates in pyrimidine metabolism; UMP biosynthesis via de novo pathway; UMP from orotate: step 1/2. Its pathway is pyrimidine metabolism; UMP biosynthesis via de novo pathway; UMP from orotate: step 2/2. Functionally, bifunctional enzyme catalyzing the last two steps of de novo pyrimidine biosynthesis, orotate phosphoribosyltransferase (OPRT), which converts orotate to orotidine-5'-monophosphate (OMP), and orotidine-5'-monophosphate decarboxylase (ODC), the terminal enzymatic reaction that decarboxylates OMP to uridine monophosphate (UMP). The protein is Uridine 5'-monophosphate synthase (UMPS) of Bos taurus (Bovine).